The primary structure comprises 286 residues: Thiamine-monophosphate kinase (286 aa).

Residues D22, S36, T37, and D38 each coordinate Mg(2+). D45 serves as a coordination point for substrate. Mg(2+)-binding residues include D66 and D111. ATP-binding positions include 110–111 (GD) and R136. Residue D191 participates in Mg(2+) binding. An ATP-binding site is contributed by S193. Position 194 (D194) interacts with Mg(2+). Y282 is a substrate binding site.

Belongs to the thiamine-monophosphate kinase family.

It carries out the reaction thiamine phosphate + ATP = thiamine diphosphate + ADP. Its pathway is cofactor biosynthesis; thiamine diphosphate biosynthesis; thiamine diphosphate from thiamine phosphate: step 1/1. In terms of biological role, catalyzes the ATP-dependent phosphorylation of thiamine-monophosphate (TMP) to form thiamine-pyrophosphate (TPP), the active form of vitamin B1. The polypeptide is Thiamine-monophosphate kinase (Methanospirillum hungatei JF-1 (strain ATCC 27890 / DSM 864 / NBRC 100397 / JF-1)).